A 141-amino-acid chain; its full sequence is Nucleoside diphosphate kinase (141 aa).

ATP is bound by residues K11, F59, R87, T93, R104, and N114. The Pros-phosphohistidine intermediate role is filled by H117.

Belongs to the NDK family. As to quaternary structure, homotetramer. Mg(2+) serves as cofactor.

Its subcellular location is the cytoplasm. It carries out the reaction a 2'-deoxyribonucleoside 5'-diphosphate + ATP = a 2'-deoxyribonucleoside 5'-triphosphate + ADP. The catalysed reaction is a ribonucleoside 5'-diphosphate + ATP = a ribonucleoside 5'-triphosphate + ADP. Functionally, major role in the synthesis of nucleoside triphosphates other than ATP. The ATP gamma phosphate is transferred to the NDP beta phosphate via a ping-pong mechanism, using a phosphorylated active-site intermediate. This chain is Nucleoside diphosphate kinase, found in Haemophilus influenzae (strain ATCC 51907 / DSM 11121 / KW20 / Rd).